Reading from the N-terminus, the 58-residue chain is MHSRFVKVKCPDCEHEQVIFDHPSTIVKCIICGRTVAEPTGGKGNIKAEIIEYVDQIE.

Zn(2+) contacts are provided by Cys10, Cys13, Cys29, and Cys32. The C4-type zinc finger occupies Cys10–Cys32.

The protein belongs to the eukaryotic ribosomal protein eS27 family. In terms of assembly, part of the 30S ribosomal subunit. Requires Zn(2+) as cofactor.

The protein is Small ribosomal subunit protein eS27 of Archaeoglobus fulgidus (strain ATCC 49558 / DSM 4304 / JCM 9628 / NBRC 100126 / VC-16).